We begin with the raw amino-acid sequence, 240 residues long: tRNA pseudouridine synthase A (240 aa).

Asp52 serves as the catalytic Nucleophile. Tyr110 serves as a coordination point for substrate.

The protein belongs to the tRNA pseudouridine synthase TruA family. In terms of assembly, homodimer.

It carries out the reaction uridine(38/39/40) in tRNA = pseudouridine(38/39/40) in tRNA. Formation of pseudouridine at positions 38, 39 and 40 in the anticodon stem and loop of transfer RNAs. The chain is tRNA pseudouridine synthase A from Solibacter usitatus (strain Ellin6076).